Reading from the N-terminus, the 302-residue chain is N-acetylmuramic acid 6-phosphate etherase (302 aa).

The SIS domain occupies 58–221 (IGKAFLNGGR…STGAMVKTGK (164 aa)). Residue glutamate 86 is the Proton donor of the active site. Residue glutamate 117 is part of the active site.

Belongs to the GCKR-like family. MurNAc-6-P etherase subfamily. As to quaternary structure, homodimer.

The enzyme catalyses N-acetyl-D-muramate 6-phosphate + H2O = N-acetyl-D-glucosamine 6-phosphate + (R)-lactate. Its pathway is amino-sugar metabolism; N-acetylmuramate degradation. In terms of biological role, specifically catalyzes the cleavage of the D-lactyl ether substituent of MurNAc 6-phosphate, producing GlcNAc 6-phosphate and D-lactate. The protein is N-acetylmuramic acid 6-phosphate etherase of Clostridium botulinum (strain Loch Maree / Type A3).